Consider the following 150-residue polypeptide: 3-dehydroquinate dehydratase (150 aa).

The Proton acceptor role is filled by Tyr26. Substrate-binding residues include Asn75, His81, and Asp88. The Proton donor role is filled by His101. Substrate contacts are provided by residues 102–103 and Arg112; that span reads LS.

This sequence belongs to the type-II 3-dehydroquinase family. Homododecamer.

It carries out the reaction 3-dehydroquinate = 3-dehydroshikimate + H2O. Its pathway is metabolic intermediate biosynthesis; chorismate biosynthesis; chorismate from D-erythrose 4-phosphate and phosphoenolpyruvate: step 3/7. Functionally, catalyzes a trans-dehydration via an enolate intermediate. This Shewanella loihica (strain ATCC BAA-1088 / PV-4) protein is 3-dehydroquinate dehydratase.